The chain runs to 66 residues: UPF0337 protein SpyM3_0896 (66 aa).

This sequence belongs to the UPF0337 (CsbD) family.

The sequence is that of UPF0337 protein SpyM3_0896 from Streptococcus pyogenes serotype M3 (strain ATCC BAA-595 / MGAS315).